Here is a 189-residue protein sequence, read N- to C-terminus: Phomopsin biosynthesis cluster protein C' (189 aa).

Belongs to the oryJ family.

In terms of biological role, part of the gene cluster that mediates the biosynthesis of the phomopsins, a group of hexapeptide mycotoxins which infects lupins and causes lupinosis disease in livestock. The role of phomC' within the phomopsins biosynthesis pathway has still to be determined. The pathway starts with the processing of the precursor phomA by several endopeptidases including kexin proteases as well as the cluster-specific S41 family peptidase phomP1 and the oligopeptidase phomG to produce 10 identical copies of the hexapeptide Tyr-Val-Ile-Pro-Ile-Asp. After being excised from the precursor peptide, the core peptides are cyclized and modified post-translationally by enzymes encoded within the gene cluster. The timing and order of proteolysis of the phomA precursor and PTMs are still unknown. Two tyrosinase-like enzymes, phomQ1 and phomQ2, catalyze the chlorination and hydroxylation of Tyr, respectively. PhomYb, is proposed to be involved in the construction of the macrocyclic structure. The other 4 ustYa family proteins may be involved in PTMs that generate the unique structure of phomopsin A. PhomYa is required for the hydroxylation of C-beta of Tyr. PhomYc, phomYd, and phomYe are responsible for the biosynthesis of 2,3-dehydroisoleucine (dIle), 2,3-dehydroaspartic acid (dAsp), and 3,4-dehydroproline (dPro), respectively. While dIle formation by phomYc is indispensable for the installation of dAsp by phomYd, the order of the other PTMs have not been elucidated yet. Most of the biosynthetic enzymes likely have broad substrate specificity, and thus, there might be a metabolic grid from a precursor to phomopsin A. The enzyme(s) responsible for the biosynthesis of 3,4-dehydrovaline (dVal) have also not been identified yet. Finally, phomM acts as an S-adenosylmethionine-dependent alpha-N-methyltransferase that catalyzes two successive N-methylation reactions, converting N-desmethyl-phomopsin A to phomopsin A and phomopsin A further to an N,N-dimethylated congener called phomopsin E. The chain is Phomopsin biosynthesis cluster protein C' from Diaporthe leptostromiformis (Lupinosis disease fungus).